Reading from the N-terminus, the 97-residue chain is NADH-ubiquinone oxidoreductase chain 4L (97 aa).

The next 3 membrane-spanning stretches (helical) occupy residues 1-21, 25-45, and 60-80; these read MALL…ILLN, FLSI…GIAI, and LFVL…MVGL.

It belongs to the complex I subunit 4L family.

It localises to the mitochondrion membrane. The catalysed reaction is a ubiquinone + NADH + 5 H(+)(in) = a ubiquinol + NAD(+) + 4 H(+)(out). Functionally, core subunit of the mitochondrial membrane respiratory chain NADH dehydrogenase (Complex I) that is believed to belong to the minimal assembly required for catalysis. Complex I functions in the transfer of electrons from NADH to the respiratory chain. The immediate electron acceptor for the enzyme is believed to be ubiquinone. In Strongylocentrotus purpuratus (Purple sea urchin), this protein is NADH-ubiquinone oxidoreductase chain 4L (ND4L).